We begin with the raw amino-acid sequence, 98 residues long: Cytochrome c2 (98 aa).

Residue Gln-1 is modified to Pyrrolidone carboxylic acid. 4 residues coordinate heme c: Cys-10, Cys-13, His-14, and Met-76.

The protein belongs to the cytochrome c family. Post-translationally, binds 1 heme c group covalently per subunit.

The protein resides in the periplasm. Functionally, cytochrome c2 is found mainly in purple, non-sulfur, photosynthetic bacteria where it functions as the electron donor to the oxidized bacteriochlorophyll in the photophosphorylation pathway. However, it may also have a role in the respiratory chain and is found in some non-photosynthetic bacteria. The protein is Cytochrome c2 of Rhodoplanes tepidamans (Rhodoplanes cryptolactis).